Here is a 151-residue protein sequence, read N- to C-terminus: Acidic phospholipase A2 1 (151 aa).

The first 21 residues, 1–21, serve as a signal peptide directing secretion; sequence MNPAHLLVLSAVCVSLLGASS. A propeptide spanning residues 22-27 is cleaved from the precursor; the sequence is IPPQPL. 7 disulfide bridges follow: C38-C104, C54-C151, C56-C72, C71-C132, C78-C125, C88-C118, and C111-C123. The Ca(2+) site is built by Y55, G57, and G59. H75 is a catalytic residue. D76 serves as a coordination point for Ca(2+). Residue D126 is part of the active site.

The cofactor is Ca(2+). As to expression, expressed by the venom gland.

It is found in the secreted. The catalysed reaction is a 1,2-diacyl-sn-glycero-3-phosphocholine + H2O = a 1-acyl-sn-glycero-3-phosphocholine + a fatty acid + H(+). In terms of biological role, snake venom phospholipase A2 (PLA2) that may exhibit cardiotoxicity, myotoxicity, antiplatelet activity, and edema-inducing activity. PLA2 catalyzes the calcium-dependent hydrolysis of the 2-acyl groups in 3-sn-phosphoglycerides. The polypeptide is Acidic phospholipase A2 1 (Ophiophagus hannah (King cobra)).